The following is a 342-amino-acid chain: Thymidylate synthase (342 aa).

Residues R31 and 156-157 each bind dUMP; that span reads RR. C176 serves as the catalytic Nucleophile. DUMP is bound by residues 196-199, N207, and 237-239; these read RSGD and HVY. D199 provides a ligand contact to (6R)-5,10-methylene-5,6,7,8-tetrahydrofolate. A341 is a binding site for (6R)-5,10-methylene-5,6,7,8-tetrahydrofolate.

The protein belongs to the thymidylate synthase family. Bacterial-type ThyA subfamily. In terms of assembly, homodimer.

The protein localises to the cytoplasm. The catalysed reaction is dUMP + (6R)-5,10-methylene-5,6,7,8-tetrahydrofolate = 7,8-dihydrofolate + dTMP. Its pathway is pyrimidine metabolism; dTTP biosynthesis. In terms of biological role, catalyzes the reductive methylation of 2'-deoxyuridine-5'-monophosphate (dUMP) to 2'-deoxythymidine-5'-monophosphate (dTMP) while utilizing 5,10-methylenetetrahydrofolate (mTHF) as the methyl donor and reductant in the reaction, yielding dihydrofolate (DHF) as a by-product. This enzymatic reaction provides an intracellular de novo source of dTMP, an essential precursor for DNA biosynthesis. This Haloferax volcanii (Halobacterium volcanii) protein is Thymidylate synthase.